Reading from the N-terminus, the 276-residue chain is Lectin-like protein At3g16530 (276 aa).

An N-terminal signal peptide occupies residues Met1–Ala19. The segment at Val20–Glu270 is legume-lectin like. Residues Asn79, Asn129, and Asn196 are each glycosylated (N-linked (GlcNAc...) asparagine).

This sequence belongs to the leguminous lectin family.

It localises to the secreted. Its subcellular location is the extracellular space. The protein resides in the apoplast. This chain is Lectin-like protein At3g16530, found in Arabidopsis thaliana (Mouse-ear cress).